The sequence spans 1071 residues: Tricorn protease (1071 aa).

The six-bladed beta propeller stretch occupies residues 39–310 (MPNLLLNPDI…EKIEKIEIGD (272 aa)). Residues 131–132 (RR) form a binds the substrate's C-terminus region. The seven-bladed beta propeller stretch occupies residues 326–675 (AEDFSPLDGD…EDERTVETDK (350 aa)). The segment at 679–745 (VSSIHEEFLQ…VEMQGEYRTS (67 aa)) is C-1; helical bundle. His746 acts as the Charge relay system in catalysis. A PDZ-like region spans residues 761 to 855 (RSGRIACDFK…DLMIDILDDD (95 aa)). The interval 856–1061 (RFIRYRSWVE…IDALIEELRN (206 aa)) is C-2; alpha-beta sandwich. 916-918 (GGG) is a binding site for substrate. The active-site Nucleophile is the Ser965. 993–995 (GIT) contributes to the substrate binding site. Glu1023 serves as the catalytic Charge relay system.

It belongs to the peptidase S41B family. In terms of assembly, part of the Tricorn proteolytic complex. Assembles to form a hexameric toroid, 20 copies of which may then assemble to form an icosahedral supermolecule of 14.6 MDa.

It is found in the cytoplasm. In terms of biological role, tricorn degrades oligopeptides (probably derived from the proteasome) and channels the products to F1, F2 and F3 proteases, which then catalyze the terminal degradation step, yielding free amino acids. The chain is Tricorn protease (tri) from Thermoplasma acidophilum (strain ATCC 25905 / DSM 1728 / JCM 9062 / NBRC 15155 / AMRC-C165).